The primary structure comprises 285 residues: MFDKTRLPYVALDVLCVLLAGLPFAILTSRHTPFQRGLFCNDESIKYPYKEDTIPYPLLGGIIIPFSIIVMIVGETLSVYFNLLHSNSFIRNNYIATIYKAIGTFLFGAAASQSLTDIAKYSIGRLRPHFLDVCDPDWSKINCSDGYIENYICRGNAQKVKEGRLSFYSGHSSFSMYCMLFVALYLQARMKGDWARLLRPTLQFGLVAVSIYVGLSRVSDYKHHWSDVLTGLIQGALVAIVVAVYVSDFFKERNSPFKERKEEDSHTTLHETPTTGNHYRNSHQP.

The Cytoplasmic segment spans residues 1–6 (MFDKTR). A PDZ-binding; involved in localization to the apical cell membrane motif is present at residues 5–7 (TRL). Residues 7–27 (LPYVALDVLCVLLAGLPFAIL) form a helical membrane-spanning segment. Over 28–53 (TSRHTPFQRGLFCNDESIKYPYKEDT) the chain is Extracellular. A helical transmembrane segment spans residues 54–74 (IPYPLLGGIIIPFSIIVMIVG). At 75–94 (ETLSVYFNLLHSNSFIRNNY) the chain is on the cytoplasmic side. The chain crosses the membrane as a helical span at residues 95 to 115 (IATIYKAIGTFLFGAAASQSL). At 116–164 (TDIAKYSIGRLRPHFLDVCDPDWSKINCSDGYIENYICRGNAQKVKEGR) the chain is on the extracellular side. Residues 120–128 (KYSIGRLRP) form a phosphatase sequence motif I region. An N-linked (GlcNAc...) asparagine glycan is attached at Asn-142. The helical transmembrane segment at 165 to 185 (LSFYSGHSSFSMYCMLFVALY) threads the bilayer. The interval 168-171 (YSGH) is phosphatase sequence motif II. His-171 acts as the Proton donors in catalysis. Residues 186–196 (LQARMKGDWAR) are Cytoplasmic-facing. A helical membrane pass occupies residues 197 to 216 (LLRPTLQFGLVAVSIYVGLS). The phosphatase sequence motif III stretch occupies residues 216–227 (SRVSDYKHHWSD). The Extracellular segment spans residues 217–229 (RVSDYKHHWSDVL). His-223 acts as the Nucleophile in catalysis. Residues 230–250 (TGLIQGALVAIVVAVYVSDFF) form a helical membrane-spanning segment. Residues 251–285 (KERNSPFKERKEEDSHTTLHETPTTGNHYRNSHQP) lie on the Cytoplasmic side of the membrane. Basic and acidic residues predominate over residues 257–269 (FKERKEEDSHTTL). Residues 257–285 (FKERKEEDSHTTLHETPTTGNHYRNSHQP) are disordered. Over residues 270-285 (HETPTTGNHYRNSHQP) the composition is skewed to polar residues.

Belongs to the PA-phosphatase related phosphoesterase family. As to quaternary structure, forms functional homodimers and homooligomers that are not required for substrate recognition and catalytic activity. Can also form heterooligomers with PLPP2 and PLPP3. Post-translationally, N-glycosylated. N-linked sugars are of the complex type. N-glycosylation is not required for the phosphatase activity.

The protein resides in the cell membrane. It is found in the apical cell membrane. Its subcellular location is the membrane raft. It localises to the membrane. The protein localises to the caveola. The catalysed reaction is a 1,2-diacyl-sn-glycero-3-phosphate + H2O = a 1,2-diacyl-sn-glycerol + phosphate. It carries out the reaction 1,2-dihexadecanoyl-sn-glycero-3-phosphate + H2O = 1,2-dihexadecanoyl-sn-glycerol + phosphate. It catalyses the reaction 1,2-di-(9Z-octadecenoyl)-sn-glycero-3-phosphate + H2O = 1,2-di-(9Z-octadecenoyl)-sn-glycerol + phosphate. The enzyme catalyses a monoacyl-sn-glycero-3-phosphate + H2O = a monoacylglycerol + phosphate. The catalysed reaction is (9Z)-octadecenoyl-sn-glycero-3-phosphate + H2O = (9Z-octadecenoyl)-glycerol + phosphate. It carries out the reaction a 1-acyl-sn-glycero-3-phosphate + H2O = a 1-acyl-sn-glycerol + phosphate. It catalyses the reaction 1-(9Z-octadecenoyl)-sn-glycero-3-phosphate + H2O = 1-(9Z-octadecenoyl)-sn-glycerol + phosphate. The enzyme catalyses a 1,2-diacyl-sn-glycerol 3-diphosphate + H2O = a 1,2-diacyl-sn-glycero-3-phosphate + phosphate + H(+). The catalysed reaction is sphing-4-enine 1-phosphate + H2O = sphing-4-enine + phosphate. It carries out the reaction an N-acylsphing-4-enine 1-phosphate + H2O = an N-acylsphing-4-enine + phosphate. It catalyses the reaction N-(octanoyl)-sphing-4-enine-1-phosphate + H2O = N-octanoylsphing-4-enine + phosphate. The enzyme catalyses N-(9Z-octadecenoyl)-ethanolamine phosphate + H2O = N-(9Z-octadecenoyl) ethanolamine + phosphate. The catalysed reaction is 1-hexadecanoyl-2-(9Z-octadecenoyl)-sn-glycero-3-phosphate + H2O = 1-hexadecanoyl-2-(9Z-octadecenoyl)-sn-glycerol + phosphate. It participates in lipid metabolism; phospholipid metabolism. With respect to regulation, magnesium-independent phospholipid phosphatase. Insensitive to N-ethylmaleimide. Its function is as follows. Magnesium-independent phospholipid phosphatase of the plasma membrane that catalyzes the dephosphorylation of a variety of glycerolipid and sphingolipid phosphate esters including phosphatidate/PA, lysophosphatidate/LPA, diacylglycerol pyrophosphate/DGPP, sphingosine 1-phosphate/S1P and ceramide 1-phosphate/C1P. Also acts on N-oleoyl ethanolamine phosphate/N-(9Z-octadecenoyl)-ethanolamine phosphate, a potential physiological compound. Through its extracellular phosphatase activity allows both the hydrolysis and the cellular uptake of these bioactive lipid mediators from the milieu, regulating signal transduction in different cellular processes. It is for instance essential for the extracellular hydrolysis of S1P and subsequent conversion into intracellular S1P. Involved in the regulation of inflammation, platelets activation, cell proliferation and migration among other processes. May also have an intracellular activity to regulate phospholipid-mediated signaling pathways. The chain is Phospholipid phosphatase 1 from Sus scrofa (Pig).